The following is a 348-amino-acid chain: Dihydroorotase (348 aa).

2 residues coordinate Zn(2+): His14 and His16. Substrate is bound by residues 16–18 (HLR) and Asn42. Zn(2+) contacts are provided by Lys100, His137, and His175. Lys100 carries the post-translational modification N6-carboxylysine. Residue His137 participates in substrate binding. Leu220 contributes to the substrate binding site. Asp248 provides a ligand contact to Zn(2+). Residue Asp248 is part of the active site. Residues His252 and Ala264 each contribute to the substrate site.

The protein belongs to the metallo-dependent hydrolases superfamily. DHOase family. Class II DHOase subfamily. Homodimer. Requires Zn(2+) as cofactor.

The enzyme catalyses (S)-dihydroorotate + H2O = N-carbamoyl-L-aspartate + H(+). It functions in the pathway pyrimidine metabolism; UMP biosynthesis via de novo pathway; (S)-dihydroorotate from bicarbonate: step 3/3. Catalyzes the reversible cyclization of carbamoyl aspartate to dihydroorotate. The sequence is that of Dihydroorotase from Pseudomonas fluorescens (strain Pf0-1).